The sequence spans 365 residues: Terpene cyclase 4 (365 aa).

Over residues 1–11 (MVPSLITPPPS) the composition is skewed to pro residues. A disordered region spans residues 1–20 (MVPSLITPPPSRSGEATPQK). 3 residues coordinate Mg(2+): aspartate 118, asparagine 260, and serine 264. The short motif at 118–122 (DDPFD) is the D(D/E)XX(D/E) motif element. The short motif at 260-268 (NDLCSYRKD) is the NSE motif element. The short motif at 341–348 (WSLYTFRY) is the WxxxxxRY motif element. Positions 347 and 348 each coordinate (2E,6E)-farnesyl diphosphate.

The protein belongs to the terpene synthase family. In terms of assembly, homodimer. It depends on Mg(2+) as a cofactor.

It carries out the reaction (2E,6E)-farnesyl diphosphate + H2O = koraiol + diphosphate. It participates in sesquiterpene biosynthesis. Functionally, terpene cyclase that catalyzes the cyclization of farnesyl diphosphate (FPP) to the sesquiterpene koraiol. In Gibberella fujikuroi (strain CBS 195.34 / IMI 58289 / NRRL A-6831) (Bakanae and foot rot disease fungus), this protein is Terpene cyclase 4.